Here is a 78-residue protein sequence, read N- to C-terminus: DNA-directed RNA polymerase subunit Rpo5 (78 aa).

This sequence belongs to the archaeal Rpo5/eukaryotic RPB5 RNA polymerase subunit family. Part of the RNA polymerase complex.

It localises to the cytoplasm. The catalysed reaction is RNA(n) + a ribonucleoside 5'-triphosphate = RNA(n+1) + diphosphate. DNA-dependent RNA polymerase (RNAP) catalyzes the transcription of DNA into RNA using the four ribonucleoside triphosphates as substrates. This chain is DNA-directed RNA polymerase subunit Rpo5, found in Methanosarcina acetivorans (strain ATCC 35395 / DSM 2834 / JCM 12185 / C2A).